The primary structure comprises 416 residues: Probable glucan 1,3-beta-glucosidase A (416 aa).

A signal peptide spans 1–22 (MIFKFSQKALVALYLVVGLAEA). Residue Glu211 is the Proton donor of the active site. 2 disulfides stabilise this stretch: Cys291/Cys415 and Cys316/Cys342. The active-site Nucleophile is Glu308. N-linked (GlcNAc...) asparagine glycosylation occurs at Asn344.

This sequence belongs to the glycosyl hydrolase 5 (cellulase A) family. Monomer. The cofactor is Mn(2+).

It localises to the secreted. The catalysed reaction is Successive hydrolysis of beta-D-glucose units from the non-reducing ends of (1-&gt;3)-beta-D-glucans, releasing alpha-glucose.. Beta-glucanases participate in the metabolism of beta-glucan, the main structural component of the cell wall. It could also function biosynthetically as a transglycosylase. The sequence is that of Probable glucan 1,3-beta-glucosidase A (exgA) from Aspergillus fumigatus (strain ATCC MYA-4609 / CBS 101355 / FGSC A1100 / Af293) (Neosartorya fumigata).